The following is a 385-amino-acid chain: Glucans biosynthesis protein C (385 aa).

10 consecutive transmembrane segments (helical) span residues Ala-17–Val-39, Phe-54–Leu-76, Val-88–Leu-110, Leu-136–Lys-158, Leu-179–Phe-198, Ile-213–His-235, Thr-242–Asn-261, Ser-276–His-295, Phe-308–Ile-330, and Ile-334–Tyr-356.

This sequence belongs to the acyltransferase 3 family. OpgC subfamily.

It localises to the cell membrane. Its pathway is glycan metabolism; osmoregulated periplasmic glucan (OPG) biosynthesis. Its function is as follows. Necessary for the succinyl substitution of periplasmic glucans. Could catalyze the transfer of succinyl residues from the cytoplasmic side of the membrane to the nascent glucan backbones on the periplasmic side of the membrane. This Escherichia coli O157:H7 protein is Glucans biosynthesis protein C.